The chain runs to 72 residues: Translation initiation factor IF-1 (72 aa).

Positions Met1–Lys72 constitute an S1-like domain.

This sequence belongs to the IF-1 family. In terms of assembly, component of the 30S ribosomal translation pre-initiation complex which assembles on the 30S ribosome in the order IF-2 and IF-3, IF-1 and N-formylmethionyl-tRNA(fMet); mRNA recruitment can occur at any time during PIC assembly.

It is found in the cytoplasm. Functionally, one of the essential components for the initiation of protein synthesis. Stabilizes the binding of IF-2 and IF-3 on the 30S subunit to which N-formylmethionyl-tRNA(fMet) subsequently binds. Helps modulate mRNA selection, yielding the 30S pre-initiation complex (PIC). Upon addition of the 50S ribosomal subunit IF-1, IF-2 and IF-3 are released leaving the mature 70S translation initiation complex. The polypeptide is Translation initiation factor IF-1 (Syntrophotalea carbinolica (strain DSM 2380 / NBRC 103641 / GraBd1) (Pelobacter carbinolicus)).